The following is an 805-amino-acid chain: Hypoxia-inducible factor 1-alpha (805 aa).

Residues 1–26 are disordered; sequence MEGSVVVSEKKRISSERRKEKSRDAA. Residues 8-26 are compositionally biased toward basic and acidic residues; that stretch reads SEKKRISSERRKEKSRDAA. Positions 17–70 constitute a bHLH domain; sequence RRKEKSRDAARCRRSNESEVFYELSHELPLPHNVSSHLDKASIMRLDHQLPAVE. PAS domains follow at residues 85-157 and 229-300; these read DKQL…PAKK and PHPS…TKGQ. The region spanning 303–346 is the PAC domain; the sequence is TGQYRMLAKKGGYVWVETQATVIYNSKNSQPQCIVCVNYVLSEV. Residues Pro-404 and Pro-560 each carry the 4-hydroxyproline modification. The interval 628-669 is disordered; sequence KESTSAPVSPYNGNRSRTSSPVRPAKAVVDKTEKSRPGTPNL. The span at 629-648 shows a compositional bias: polar residues; the sequence is ESTSAPVSPYNGNRSRTSSP. A (3S)-3-hydroxyasparagine modification is found at Asn-782.

As to quaternary structure, efficient DNA binding requires heterodimerization of an alpha and a beta/ARNT subunit. Post-translationally, in normoxia, is hydroxylated on Pro-404 and Pro-560. The hydroxylated prolines promote interaction with VHL, initiating rapid ubiquitination and subsequent proteasomal degradation. Under hypoxia, proline hydroxylation is impaired and ubiquitination is attenuated, resulting in stabilization. In terms of processing, in normoxia, is hydroxylated on Asn-782, thus abrogating interaction with CREBBP and EP300 and preventing transcriptional activation. The iron and 2-oxoglutarate dependent 3-hydroxylation of asparagine is (S) stereospecific within HIF CTAD domains.

The protein resides in the cytoplasm. The protein localises to the nucleus. It is found in the nucleus speckle. Its activity is regulated as follows. Induced by reactive oxygen species (ROS). Its function is as follows. Functions as a master transcriptional regulator of the adaptive response to hypoxia. Under hypoxic conditions, activates the transcription of over 40 genes, including erythropoietin, glucose transporters, glycolytic enzymes, vascular endothelial growth factor, HILPDA, and other genes whose protein products increase oxygen delivery or facilitate metabolic adaptation to hypoxia. Plays an essential role in embryonic vascularization, tumor angiogenesis and pathophysiology of ischemic disease. The sequence is that of Hypoxia-inducible factor 1-alpha (hif1a) from Xenopus laevis (African clawed frog).